We begin with the raw amino-acid sequence, 105 residues long: Thioredoxin (105 aa).

Residues V2 to L105 form the Thioredoxin domain. K3 carries the N6-acetyllysine modification. K8 is modified (N6-succinyllysine). Catalysis depends on nucleophile residues C32 and C35. An intrachain disulfide couples C32 to C35. K39 is subject to N6-acetyllysine. An S-nitrosocysteine mark is found at C62 and C69. Position 73 is an S-nitrosocysteine; alternate (C73). N6-acetyllysine; alternate is present on K94. At K94 the chain carries N6-succinyllysine; alternate.

This sequence belongs to the thioredoxin family. In terms of assembly, homodimer; disulfide-linked. Interacts with TXNIP through the redox-active site. Interacts with MAP3K5 and CASP3. Interacts with APEX1; the interaction stimulates the FOS/JUN AP-1 DNA-binding activity in a redox-dependent manner. In the fully reduced protein, both Cys-69 and Cys-73 are nitrosylated in response to nitric oxide (NO). When two disulfide bonds are present in the protein, only Cys-73 is nitrosylated. Cys-73 can serve as donor for nitrosylation of target proteins.

The protein localises to the nucleus. It localises to the cytoplasm. The protein resides in the secreted. Participates in various redox reactions through the reversible oxidation of its active center dithiol to a disulfide and catalyzes dithiol-disulfide exchange reactions. Plays a role in the reversible S-nitrosylation of cysteine residues in target proteins, and thereby contributes to the response to intracellular nitric oxide. Nitrosylates the active site Cys of CASP3 in response to nitric oxide (NO), and thereby inhibits caspase-3 activity. Induces the FOS/JUN AP-1 DNA binding activity in ionizing radiation (IR) cells through its oxidation/reduction status and stimulates AP-1 transcriptional activity. This Oryctolagus cuniculus (Rabbit) protein is Thioredoxin (TXN).